Here is a 110-residue protein sequence, read N- to C-terminus: Heat shock protein Hsp-12.2 (110 aa).

Positions 15-110 constitute a sHSP domain; sequence DWPLQHNDGV…VLTITASKKA (96 aa).

This sequence belongs to the small heat shock protein (HSP20) family.

In Caenorhabditis elegans, this protein is Heat shock protein Hsp-12.2 (hsp-12.2).